The primary structure comprises 327 residues: Mitochondrial coenzyme A transporter SLC25A42 (327 aa).

3 Solcar repeats span residues Lys34 to Leu120, Leu132 to Leu217, and Pro227 to Leu315. A run of 6 helical transmembrane segments spans residues Val36–Pro56, Leu92–Cys112, Leu138–Val158, Gly192–Phe209, Leu233–Val253, and Val296–Leu316.

This sequence belongs to the mitochondrial carrier (TC 2.A.29) family.

The protein resides in the mitochondrion inner membrane. The enzyme catalyses ADP(out) + CoA(in) = ADP(in) + CoA(out). It catalyses the reaction 3'-dephospho-CoA(in) + ADP(out) = 3'-dephospho-CoA(out) + ADP(in). The catalysed reaction is adenosine 3',5'-bisphosphate(in) + ADP(out) = adenosine 3',5'-bisphosphate(out) + ADP(in). It carries out the reaction AMP(in) + ADP(out) = AMP(out) + ADP(in). The enzyme catalyses dADP(in) + ADP(out) = dADP(out) + ADP(in). It catalyses the reaction ADP(in) + ATP(out) = ADP(out) + ATP(in). Functionally, mitochondrial carrier mediating the transport of coenzyme A (CoA) in mitochondria in exchange for intramitochondrial (deoxy)adenine nucleotides and adenosine 3',5'-diphosphate. In Xenopus laevis (African clawed frog), this protein is Mitochondrial coenzyme A transporter SLC25A42 (slc25a42).